Reading from the N-terminus, the 708-residue chain is Lactotransferrin (708 aa).

Positions 1-19 are cleaved as a signal peptide; sequence MKLFVPALLSLGALGLCLA. 2 consecutive Transferrin-like domains span residues 25-352 and 364-693; these read VRWC…NLRE and VVWC…NLKK. Cystine bridges form between C28-C64 and C38-C55. D79 lines the Fe cation pocket. K92 is an active-site residue. Fe cation is bound at residue Y111. 5 cysteine pairs are disulfide-bonded: C134–C217, C176–C192, C179–C202, C189–C200, and C250–C264. Positions 136, 140, 142, and 143 each coordinate hydrogencarbonate. Y211 is a Fe cation binding site. N252 is a glycosylation site (N-linked (GlcNAc...) (high mannose) asparagine). H272 is a Fe cation binding site. The active-site Nucleophile is S278. The N-linked (GlcNAc...) (hybrid) asparagine glycan is linked to N300. 2 cysteine pairs are disulfide-bonded: C367–C399 and C377–C390. Positions 414 and 452 each coordinate Fe cation. 8 cysteine pairs are disulfide-bonded: C424-C703, C444-C666, C476-C551, C500-C694, C510-C524, C521-C534, C592-C606, and C644-C649. Hydrogencarbonate is bound by residues T478, R482, A484, and G485. N-linked (GlcNAc...) (complex) asparagine; alternate glycosylation is present at N495. N-linked (GlcNAc...) (high mannose) asparagine; alternate glycosylation is present at N495. Residue N495 is glycosylated (N-linked (GlcNAc...) (hybrid) asparagine; alternate). Position 545 (Y545) interacts with Fe cation. N-linked (GlcNAc...) (high mannose) asparagine glycosylation occurs at N564. Residue H614 coordinates Fe cation.

It belongs to the transferrin family. As to quaternary structure, monomer. Found in a complex with LTF, CLU, EPPIN and SEMG1. Found in a complex with MPO and LTF; interacts directly with CP, allows Fe(3+) incorporation into LTF and activation of CP ferroxidase activity. In terms of processing, poly-N-acetyllactosaminic carbohydrate moiety seems to be needed for TLR4 activation.

It localises to the secreted. It is found in the cytoplasmic granule. Its function is as follows. Transferrins are iron binding transport proteins which can bind two Fe(3+) ions in association with the binding of an anion, usually bicarbonate. Major iron-binding and multifunctional protein found in exocrine fluids such as breast milk and mucosal secretions. Has antimicrobial activity, which depends on the extracellular cation concentration. Antimicrobial properties include bacteriostasis, which is related to its ability to sequester free iron and thus inhibit microbial growth, as well as direct bactericidal properties leading to the release of lipopolysaccharides from the bacterial outer membrane. Can also prevent bacterial biofilm development in P.aeruginosa infection. Has weak antifungal activity against C.albicans. Has anabolic, differentiating and anti-apoptotic effects on osteoblasts and can also inhibit osteoclastogenesis, possibly playing a role in the regulation of bone growth. Promotes binding of species C adenoviruses to epithelial cells, promoting adenovirus infection. Can inhibit papillomavirus infections. Stimulates the TLR4 signaling pathway leading to NF-kappa-B activation and subsequent pro-inflammatory cytokine production while also interfering with the lipopolysaccharide (LPS)-stimulated TLR4 signaling. Inhibits neutrophil granulocyte migration to sites of apoptosis, when secreted by apoptotic cells. Stimulates VEGFA-mediated endothelial cell migration and proliferation. Binds heparin, chondroitin sulfate and possibly other glycosaminoglycans (GAGs). Also binds specifically to pneumococcal surface protein A (PspA), the lipid A portion of bacterial lipopolysaccharide (LPS), lysozyme and DNA. Functionally, lactoferricin binds to the bacterial surface and is crucial for the bactericidal functions. Has some antiviral activity against papillomavirus infection. N-terminal region shows strong antifungal activity against C.albicans. Contains two BBXB heparin-binding consensus sequences that appear to form the predominate functional GAG-binding site. In terms of biological role, the lactotransferrin transferrin-like domain 1 functions as a serine protease of the peptidase S60 family that cuts arginine rich regions. This function contributes to the antimicrobial activity. Shows a preferential cleavage at -Arg-Ser-Arg-Arg-|- and -Arg-Arg-Ser-Arg-|-, and of Z-Phe-Arg-|-aminomethylcoumarin sites. This is Lactotransferrin (LTF) from Bubalus bubalis (Domestic water buffalo).